The sequence spans 156 residues: MSRRNAAVKRPVLPDPQFNSRLASMMISRLMKHGKKSTAQKILSDAFSLISERTGGNAVELFETAVKNATPLVEVRARRVGGATYQVPMEVRQERGTAMALRWLVTFSRGRNGKSMSQKLAGELMDAANETGSAVKKREDTHKMAEANKAFAHYRY.

It belongs to the universal ribosomal protein uS7 family. As to quaternary structure, part of the 30S ribosomal subunit. Contacts proteins S9 and S11.

Its function is as follows. One of the primary rRNA binding proteins, it binds directly to 16S rRNA where it nucleates assembly of the head domain of the 30S subunit. Is located at the subunit interface close to the decoding center, probably blocks exit of the E-site tRNA. This Prochlorococcus marinus subsp. pastoris (strain CCMP1986 / NIES-2087 / MED4) protein is Small ribosomal subunit protein uS7.